The chain runs to 304 residues: D-alanine--D-alanine ligase (304 aa).

The ATP-grasp domain occupies 103-299; it reads KLIWQALGLP…FADLCIEILK (197 aa). 129–184 is an ATP binding site; it reads EEKLGLPMFVKPAAEGSSVGVVKVKEKGRLKSVYEELKHLQGEIIAERFIGGGEYS. Asp-253, Glu-266, and Asn-268 together coordinate Mg(2+).

It belongs to the D-alanine--D-alanine ligase family. Mg(2+) serves as cofactor. Requires Mn(2+) as cofactor.

It is found in the cytoplasm. It catalyses the reaction 2 D-alanine + ATP = D-alanyl-D-alanine + ADP + phosphate + H(+). It functions in the pathway cell wall biogenesis; peptidoglycan biosynthesis. Its function is as follows. Cell wall formation. This Neisseria gonorrhoeae (strain ATCC 700825 / FA 1090) protein is D-alanine--D-alanine ligase.